The sequence spans 266 residues: MSSPGEFYNSLPPITKAYGTLCFFTTVATQLGLVAPVHIALIPELVLKQFQIWRLITNLFFLGGFSINFGIRLLMIARYGVQLEKGPFERRTADFLWMMIFGSFTLLVLSVIPFFWTPFLGVSLVFMLLYLWSREFPNANISLYGLVTLKAFYLPWAMLALDVIFGSPIMPDLLGIIAGHLYYFLTVLHPLATGKNYLKTPKWVNKIVARWRIGAPVASVRQAGGVGAAGPGAGGGVGGGGAYSSARAPPESSNTAFRGRSYRLTD.

Over 1-20 the chain is Cytoplasmic; sequence MSSPGEFYNSLPPITKAYGT. The helical transmembrane segment at 21 to 41 threads the bilayer; sequence LCFFTTVATQLGLVAPVHIAL. The Lumenal segment spans residues 42-55; the sequence is IPELVLKQFQIWRL. A helical transmembrane segment spans residues 56-76; the sequence is ITNLFFLGGFSINFGIRLLMI. The Cytoplasmic portion of the chain corresponds to 77 to 94; the sequence is ARYGVQLEKGPFERRTAD. A helical membrane pass occupies residues 95 to 115; the sequence is FLWMMIFGSFTLLVLSVIPFF. Residues 116-156 are Lumenal-facing; sequence WTPFLGVSLVFMLLYLWSREFPNANISLYGLVTLKAFYLPW. Residues 157 to 177 traverse the membrane as a helical segment; it reads AMLALDVIFGSPIMPDLLGII. Over 178–266 the chain is Cytoplasmic; sequence AGHLYYFLTV…FRGRSYRLTD (89 aa). Residues 235–266 form a disordered region; it reads GGVGGGGAYSSARAPPESSNTAFRGRSYRLTD.

The protein belongs to the derlin family.

Its subcellular location is the endoplasmic reticulum membrane. Its function is as follows. May be involved in the degradation process of specific misfolded endoplasmic reticulum (ER) luminal proteins. The sequence is that of Derlin-1 (DER1) from Arabidopsis thaliana (Mouse-ear cress).